The chain runs to 334 residues: Glycerol-1-phosphate dehydrogenase [NAD(P)+] (334 aa).

NAD(+) contacts are provided by residues 77–81 and 99–102; these read GKPID and TTAS. Substrate is bound at residue D104. An NAD(+)-binding site is contributed by S108. D147 contacts substrate. 2 residues coordinate Zn(2+): D147 and H225. H229 provides a ligand contact to substrate. H246 lines the Zn(2+) pocket.

It belongs to the glycerol-1-phosphate dehydrogenase family. It depends on Zn(2+) as a cofactor.

Its subcellular location is the cytoplasm. It catalyses the reaction sn-glycerol 1-phosphate + NAD(+) = dihydroxyacetone phosphate + NADH + H(+). The enzyme catalyses sn-glycerol 1-phosphate + NADP(+) = dihydroxyacetone phosphate + NADPH + H(+). The protein operates within membrane lipid metabolism; glycerophospholipid metabolism. Functionally, catalyzes the NAD(P)H-dependent reduction of dihydroxyacetonephosphate (DHAP or glycerone phosphate) to glycerol 1-phosphate (G1P). The G1P thus generated is used as the glycerophosphate backbone of phospholipids in the cellular membranes of Archaea. This chain is Glycerol-1-phosphate dehydrogenase [NAD(P)+], found in Methanococcus vannielii (strain ATCC 35089 / DSM 1224 / JCM 13029 / OCM 148 / SB).